The sequence spans 258 residues: Phosphate import ATP-binding protein PstB (258 aa).

The ABC transporter domain maps to 12–253; that stretch reads LEVKNLNFYY…PARKETEDYI (242 aa). Residue 44–51 participates in ATP binding; that stretch reads GPSGCGKS.

The protein belongs to the ABC transporter superfamily. Phosphate importer (TC 3.A.1.7) family. In terms of assembly, the complex is composed of two ATP-binding proteins (PstB), two transmembrane proteins (PstC and PstA) and a solute-binding protein (PstS).

It is found in the cell inner membrane. The catalysed reaction is phosphate(out) + ATP + H2O = ADP + 2 phosphate(in) + H(+). Functionally, part of the ABC transporter complex PstSACB involved in phosphate import. Responsible for energy coupling to the transport system. This is Phosphate import ATP-binding protein PstB from Bordetella parapertussis (strain 12822 / ATCC BAA-587 / NCTC 13253).